The chain runs to 1287 residues: Rho GTPase-activating protein 33 (1287 aa).

The interval methionine 1–arginine 40 is disordered. Serine 8 carries the phosphoserine modification. The PX; atypical domain maps to phenylalanine 59 to leucine 168. The region spanning proline 186–glutamate 248 is the SH3 domain. Residues cysteine 315 to phenylalanine 510 enclose the Rho-GAP domain. Disordered regions lie at residues arginine 551–alanine 792, alanine 813–leucine 832, lysine 859–proline 1030, glycine 1056–proline 1075, glycine 1090–phenylalanine 1134, and proline 1146–cysteine 1287. Over residues threonine 558–proline 571 the composition is skewed to low complexity. A Phosphoserine modification is found at serine 570. Positions alanine 572 to arginine 584 are enriched in basic and acidic residues. Residues serine 622–serine 645 are compositionally biased toward polar residues. A Phosphoserine modification is found at serine 636. Positions alanine 672–serine 709 are enriched in low complexity. At serine 727 the chain carries Phosphoserine. Positions proline 752–proline 766 are enriched in pro residues. Low complexity-rich tracts occupy residues alanine 813–glycine 829 and proline 896–glutamate 919. Composition is skewed to polar residues over residues arginine 972–arginine 981 and serine 1019–proline 1028. Phosphotyrosine is present on tyrosine 1169. Positions glycine 1175–proline 1189 are enriched in low complexity. Arginine 1244 bears the Omega-N-methylarginine mark. Over residues serine 1274–cysteine 1287 the composition is skewed to polar residues.

The protein belongs to the PX domain-containing GAP family. Specifically interacts with CDC42 and RHOQ/TC10 through its Rho-GAP domain. Interacts with NEK6.

Functionally, may be involved in several stages of intracellular trafficking. Could play an important role in the regulation of glucose transport by insulin. May act as a downstream effector of RHOQ/TC10 in the regulation of insulin-stimulated glucose transport. The protein is Rho GTPase-activating protein 33 (ARHGAP33) of Homo sapiens (Human).